The chain runs to 114 residues: Fluoride-specific ion channel FluC 1 (114 aa).

Helical transmembrane passes span 3–23, 30–50, 55–75, and 87–107; these read IDIK…GALF, IFIV…LNIL, LTLC…MSHL, and FLLN…LGHI. Na(+)-binding residues include glycine 63 and threonine 66.

The protein belongs to the fluoride channel Fluc/FEX (TC 1.A.43) family.

It localises to the cell inner membrane. It catalyses the reaction fluoride(in) = fluoride(out). Its activity is regulated as follows. Na(+) is not transported, but it plays an essential structural role and its presence is essential for fluoride channel function. Functionally, fluoride-specific ion channel. Important for reducing fluoride concentration in the cell, thus reducing its toxicity. The sequence is that of Fluoride-specific ion channel FluC 1 from Prochlorococcus marinus (strain NATL2A).